The following is an 863-amino-acid chain: Disintegrin and metalloproteinase domain-containing protein 15 (863 aa).

The N-terminal stretch at 1-17 (MRLALLWALGLLGAGSP) is a signal peptide. Positions 18 to 206 (LPSWPLPNIG…LGQRHIRRRR (189 aa)) are excised as a propeptide. Positions 22–45 (PLPNIGGTEEQQAESEKAPREPLE) are disordered. The segment covering 35–44 (ESEKAPREPL) has biased composition (basic and acidic residues). Residues 177–184 (HTCALSWR) carry the Cysteine switch motif. C179 contributes to the Zn(2+) binding site. The Extracellular portion of the chain corresponds to 207-696 (DVVTETKTVE…QLKATSSLTT (490 aa)). The 202-residue stretch at 213 to 414 (KTVELVIVAD…GMGSCLFERL (202 aa)) folds into the Peptidase M12B domain. N237 carries an N-linked (GlcNAc...) asparagine glycan. 4 disulfide bridges follow: C323-C409, C365-C393, C367-C376, and C480-C500. Position 348 (H348) interacts with Zn(2+). E349 is a catalytic residue. The Zn(2+) site is built by H352 and H358. N-linked (GlcNAc...) asparagine glycosylation is found at N389 and N392. In terms of domain architecture, Disintegrin spans 421–508 (AAFCGNMFVE…QCPPDVSLGD (88 aa)). The Cell attachment site signature appears at 484 to 486 (RGD). 2 N-linked (GlcNAc...) asparagine glycosylation sites follow: N606 and N611. 3 disulfides stabilise this stretch: C657–C667, C661–C673, and C675–C684. Residues 657–685 (CRSKCHGHGVCDSNRHCYCEEGWAPPDCT) enclose the EGF-like domain. The chain crosses the membrane as a helical span at residues 697-717 (GLLLSLLVLLVLVMLGASYWY). Residues Y715 and Y735 each carry the phosphotyrosine; by HCK and LCK modification. Over 718 to 863 (RARLHQRLCQ…PPPTVSSLYL (146 aa)) the chain is Cytoplasmic. The disordered stretch occupies residues 736 to 863 (RAAQSGPSER…PPPTVSSLYL (128 aa)). Positions 767–778 (PAPPSRPLPPDP) are enriched in pro residues. A compositionally biased stretch (basic and acidic residues) spans 779–789 (VSKRLQAELAD). Pro residues-rich tracts occupy residues 791–800 (PNPPTRPLPA) and 813–824 (AKPPPPRKPLPA). 2 short sequence motifs (SH3-binding) span residues 815–821 (PPPPRKP) and 850–856 (RPAPPPP).

As to quaternary structure, interacts with ITAGV-ITGB3 (vitronectin receptor). Interacts with SH3GL2 and SNX9; this interaction occurs preferentially with ADAM15 precursor, rather than the processed form, suggesting it occurs in a secretory pathway compartment prior to the medial Golgi. Interacts with ITAG9-ITGB1. Interacts specifically with Src family protein-tyrosine kinases (PTKs). Interacts with SH3PXD2A. Interacts with ITAGV-ITGB1. Interacts with GRB2, HCK, ITSN1, ITSN2, LYN, MAPK1, MAPK3, NCF1, NCK1, nephrocystin, PTK6, SNX33, LCK and SRC. The cofactor is Zn(2+). In terms of processing, the precursor is cleaved by a furin endopeptidase. Phosphorylation increases association with PTKs. In terms of tissue distribution, expressed in colon and small intestine. Expressed in airway smooth muscle and glomerular mesangial cells (at protein level). Ubiquitously expressed. Overexpressed in atherosclerotic lesions. Constitutively expressed in cultured endothelium and smooth muscle. Expressed in chondrocytes. Expressed in airway smooth muscle and glomerular mesangial cells.

It is found in the endomembrane system. The protein localises to the cell junction. The protein resides in the adherens junction. It localises to the cell projection. Its subcellular location is the cilium. It is found in the flagellum. The protein localises to the cytoplasmic vesicle. The protein resides in the secretory vesicle. It localises to the acrosome. Its activity is regulated as follows. Inhibited by hydroxamate-type metalloproteinase inhibitors such as marimastat. Inhibited by metalloproteinase inhibitor 2 (TIMP-2) and TIMP-3 at nanomolar concentrations. Not significantly inhibited by TIMP-1 at concentrations of up to 100 nM. Not activated by PMA or ionomycin. In terms of biological role, active metalloproteinase with gelatinolytic and collagenolytic activity. Plays a role in the wound healing process. Mediates both heterotypic intraepithelial cell/T-cell interactions and homotypic T-cell aggregation. Inhibits beta-1 integrin-mediated cell adhesion and migration of airway smooth muscle cells. Suppresses cell motility on or towards fibronectin possibly by driving alpha-v/beta-1 integrin (ITAGV-ITGB1) cell surface expression via ERK1/2 inactivation. Cleaves E-cadherin in response to growth factor deprivation. Plays a role in glomerular cell migration. Plays a role in pathological neovascularization. May play a role in cartilage remodeling. May be proteolytically processed, during sperm epididymal maturation and the acrosome reaction. May play a role in sperm-egg binding through its disintegrin domain. This chain is Disintegrin and metalloproteinase domain-containing protein 15 (ADAM15), found in Homo sapiens (Human).